The following is a 91-amino-acid chain: Small ribosomal subunit protein uS19 (91 aa).

Belongs to the universal ribosomal protein uS19 family.

Functionally, protein S19 forms a complex with S13 that binds strongly to the 16S ribosomal RNA. The polypeptide is Small ribosomal subunit protein uS19 (Ectopseudomonas mendocina (strain ymp) (Pseudomonas mendocina)).